A 347-amino-acid chain; its full sequence is 3-isopropylmalate dehydrogenase (347 aa).

Substrate is bound by residues Arg-95, Arg-105, Arg-129, and Asp-220. 3 residues coordinate Mg(2+): Asp-220, Asp-244, and Asp-248. Residue 280–292 (GSAPDIAGQGKAD) coordinates NAD(+).

This sequence belongs to the isocitrate and isopropylmalate dehydrogenases family. LeuB type 2 subfamily. As to quaternary structure, homodimer. Mg(2+) serves as cofactor. It depends on Mn(2+) as a cofactor.

It localises to the cytoplasm. The enzyme catalyses (2R,3S)-3-isopropylmalate + NAD(+) = 4-methyl-2-oxopentanoate + CO2 + NADH. The protein operates within amino-acid biosynthesis; L-leucine biosynthesis; L-leucine from 3-methyl-2-oxobutanoate: step 3/4. Its function is as follows. Catalyzes the oxidation of 3-carboxy-2-hydroxy-4-methylpentanoate (3-isopropylmalate) to 3-carboxy-4-methyl-2-oxopentanoate. The product decarboxylates to 4-methyl-2 oxopentanoate. In Beutenbergia cavernae (strain ATCC BAA-8 / DSM 12333 / CCUG 43141 / JCM 11478 / NBRC 16432 / NCIMB 13614 / HKI 0122), this protein is 3-isopropylmalate dehydrogenase.